Consider the following 234-residue polypeptide: tRNA (guanine-N(1)-)-methyltransferase (234 aa).

S-adenosyl-L-methionine contacts are provided by residues G112 and I132 to L137.

Belongs to the RNA methyltransferase TrmD family. In terms of assembly, homodimer.

Its subcellular location is the cytoplasm. The catalysed reaction is guanosine(37) in tRNA + S-adenosyl-L-methionine = N(1)-methylguanosine(37) in tRNA + S-adenosyl-L-homocysteine + H(+). Functionally, specifically methylates guanosine-37 in various tRNAs. This chain is tRNA (guanine-N(1)-)-methyltransferase, found in Campylobacter jejuni subsp. jejuni serotype O:6 (strain 81116 / NCTC 11828).